The sequence spans 179 residues: ATP synthase subunit delta (179 aa).

Belongs to the ATPase delta chain family. In terms of assembly, F-type ATPases have 2 components, F(1) - the catalytic core - and F(0) - the membrane proton channel. F(1) has five subunits: alpha(3), beta(3), gamma(1), delta(1), epsilon(1). F(0) has three main subunits: a(1), b(2) and c(10-14). The alpha and beta chains form an alternating ring which encloses part of the gamma chain. F(1) is attached to F(0) by a central stalk formed by the gamma and epsilon chains, while a peripheral stalk is formed by the delta and b chains.

It localises to the cell inner membrane. Its function is as follows. F(1)F(0) ATP synthase produces ATP from ADP in the presence of a proton or sodium gradient. F-type ATPases consist of two structural domains, F(1) containing the extramembraneous catalytic core and F(0) containing the membrane proton channel, linked together by a central stalk and a peripheral stalk. During catalysis, ATP synthesis in the catalytic domain of F(1) is coupled via a rotary mechanism of the central stalk subunits to proton translocation. In terms of biological role, this protein is part of the stalk that links CF(0) to CF(1). It either transmits conformational changes from CF(0) to CF(1) or is implicated in proton conduction. This Burkholderia ambifaria (strain ATCC BAA-244 / DSM 16087 / CCUG 44356 / LMG 19182 / AMMD) (Burkholderia cepacia (strain AMMD)) protein is ATP synthase subunit delta.